A 212-amino-acid chain; its full sequence is Adenylate kinase (212 aa).

10–15 lines the ATP pocket; it reads GAGKGT. Residues 30 to 59 form an NMP region; sequence STGDMFRAAMANQTEMGRLAKSYIDKGELV. AMP contacts are provided by residues threonine 31, arginine 36, 57–59, 86–89, and glutamine 93; these read ELV and GYPR. An LID region spans residues 127-159; sequence GRIINRKTGETFHKVFNPPVDYKEEDYYQREDD. ATP contacts are provided by residues arginine 128 and 137–138; that span reads TF. AMP is bound by residues arginine 156 and arginine 167. Residue glutamine 195 coordinates ATP.

In terms of assembly, monomer.

The protein localises to the cytoplasm. It carries out the reaction AMP + ATP = 2 ADP. Its pathway is purine metabolism; AMP biosynthesis via salvage pathway; AMP from ADP: step 1/1. Functionally, catalyzes the reversible transfer of the terminal phosphate group between ATP and AMP. Plays an important role in cellular energy homeostasis and in adenine nucleotide metabolism. This chain is Adenylate kinase, found in Streptococcus pyogenes serotype M6 (strain ATCC BAA-946 / MGAS10394).